A 1510-amino-acid chain; its full sequence is Cysteine-tryptophan domain-containing zinc finger protein 5 (1510 aa).

A compositionally biased stretch (polar residues) spans 174–196; it reads YCQRTSSENDSNHSQQLLNSGPE. 4 disordered regions span residues 174 to 198, 449 to 497, 555 to 574, and 582 to 616; these read YCQR…PEQK, SSLD…CAKD, KPNY…YVLD, and LHTE…DHKI. The segment covering 454–465 has biased composition (basic and acidic residues); sequence GFSHKTKSDKCN. Residues 467 to 476 show a composition bias toward polar residues; the sequence is QPVTTSSQLQ. Composition is skewed to basic and acidic residues over residues 479–497 and 556–574; these read PAKK…CAKD and PNYD…YVLD. The segment at 645-698 adopts a CW-type zinc-finger fold; it reads SEPVDQWVCCDKCETWRLLPYGMNSDTLPKKWRCSMQSWLPGMNNCKLSEGETT. Zn(2+) is bound by residues cysteine 654, cysteine 657, cysteine 678, and cysteine 690. A compositionally biased stretch (basic and acidic residues) spans 768–780; the sequence is KQKRIESSDKGEK. Disordered stretches follow at residues 768–893, 1003–1050, and 1149–1194; these read KQKR…RDLF, STAA…LDRH, and LPIH…VRPD. A compositionally biased stretch (polar residues) spans 781–790; the sequence is STVTISSGQT. Basic and acidic residues predominate over residues 874–893; that stretch reads NSDRGARASDAGKSDPRDLF. The segment covering 1003–1016 has biased composition (low complexity); sequence STAATSSSSKVSSS. 2 stretches are compositionally biased toward polar residues: residues 1026–1040 and 1162–1182; these read TRTS…SPLR and PDQN…QAKL.

Highly expressed in young panicles. Expressed at low levels in leaf sheaths, nodes, internodes and axillary buds.

It is found in the nucleus. Binds to histones H3K4me1, H3K4me2 and H3K4me3 in GST pull-down assay. May facilitate the recruitment of effectors to mediate gene expression. In Oryza sativa subsp. japonica (Rice), this protein is Cysteine-tryptophan domain-containing zinc finger protein 5.